The sequence spans 631 residues: MSVGVPVNPSSSSQLPAAPTTTTRRRVADSQEDHSHVNTVGGGNAVVYVPDEEETATSCCGGGGGGGSLSCCPSGSHHNYLVGFLSLRKFRLVWMLMVENKSKWTAGIARNMRSTTNLGRFILTLLSILVVTFFLIVALSGGVGRRRKHVEKHEFVVSIHPRPTIEKIIREDESSNSFQVLVPKTTSIPEIWNQPEVGNYQKCVARPKNQRPIKQTNGYLLVHANGGLNQMRTGICDMVAIAKIMNATLVLPFLDHSSFWSDPSSFKDIFDWKHFIKVLAEDVNIVEYLPQEFASIKPLEKNPVSWSKSSYYRNSISKLLKKHKVIVFNHTDSRLANNSPPPSIQRLRCRANYEALRYSEDIENLSNVLSSRLRENNEPYLALHLRYEKDMLAFTGCNHSLSNEESIDLEKMRFSIPHWKEKVINGTERRLEGNCPMTPREAAVFLKAMGFPSTTNIYIVAGKIYGQNSMTAFHEEFPNVFFHNTLATEEELSTIKPYQNRLAALDYNLALESDIFAYTYDGNMAKAVQGHRRFEGFRKTINPDRQRFVRLIDRLDAGLISWEDFSSKVKKMHQHRIGAPYLRQPGKAGMSPKLEENFYANPLPGCVCDTSEEQTGLNRFERPSLRAQSLR.

Over residues 1–13 (MSVGVPVNPSSSS) the composition is skewed to low complexity. The interval 1 to 36 (MSVGVPVNPSSSSQLPAAPTTTTRRRVADSQEDHSH) is disordered. Topologically, residues 1–120 (MSVGVPVNPS…NMRSTTNLGR (120 aa)) are cytoplasmic. The segment covering 26–36 (RVADSQEDHSH) has biased composition (basic and acidic residues). The helical; Signal-anchor for type II membrane protein transmembrane segment at 121–141 (FILTLLSILVVTFFLIVALSG) threads the bilayer. The Lumenal segment spans residues 142 to 631 (GVGRRRKHVE…RPSLRAQSLR (490 aa)). 3 N-linked (GlcNAc...) asparagine glycosylation sites follow: asparagine 246, asparagine 329, and asparagine 364. 384–386 (HLR) contributes to the substrate binding site. Asparagine 398 and asparagine 425 each carry an N-linked (GlcNAc...) asparagine glycan.

The protein belongs to the glycosyltransferase GT106 family. In terms of tissue distribution, ubiquitous. Strong expression in young seedlings, particularly at the junction between hypocotyl and root, in emerging cotyledons, and in parts of the roots. Also detected in the inflorescence (sepals, petals, mature pollen and siliques) and rosette leaves.

Its subcellular location is the golgi apparatus membrane. The protein operates within glycan metabolism. Its function is as follows. Glycosyltransferase required for normal cell adhesion and cell wall integrity. The chain is Protein FRIABLE 1 from Arabidopsis thaliana (Mouse-ear cress).